A 400-amino-acid chain; its full sequence is Carnosine N-methyltransferase (400 aa).

Residues 1 to 49 (MQRRRRAPPASQPAQDSGHSEEVEVQFSAGRLGSAAPAGPPVRGTAEDE) form a disordered region. S-adenosyl-L-methionine-binding residues include glutamine 155, arginine 158, glycine 199, glutamate 220, aspartate 286, phenylalanine 287, and cysteine 303. Residue aspartate 307 coordinates carnosine. Position 315 (tyrosine 315) interacts with S-adenosyl-L-methionine. Carnosine is bound by residues histidine 338 and tyrosine 389.

Belongs to the carnosine N-methyltransferase family. As to quaternary structure, homodimer. Each monomer accommodates one molecule of carnosine in its active pocket, precisely anchoring the histidine imidazole ring such that only N1 is exposed and deprotonated for methylation. In terms of tissue distribution, expressed at higher level in skeletal muscle compared to other tissues.

Its subcellular location is the cytoplasm. It is found in the cytosol. It localises to the nucleus. It carries out the reaction carnosine + S-adenosyl-L-methionine = anserine + S-adenosyl-L-homocysteine + H(+). N-methyltransferase that catalyzes the formation of anserine (beta-alanyl-N(Pi)-methyl-L-histidine) from carnosine. Anserine, a methylated derivative of carnosine (beta-alanyl-L-histidine), is an abundant constituent of vertebrate skeletal muscles. Also methylates other L-histidine-containing di- and tripeptides such as Gly-Gly-His, Gly-His and homocarnosine (GABA-His). In Rattus norvegicus (Rat), this protein is Carnosine N-methyltransferase.